A 294-amino-acid chain; its full sequence is 4-hydroxy-tetrahydrodipicolinate synthase (294 aa).

Pyruvate is bound at residue T47. Y135 (proton donor/acceptor) is an active-site residue. K163 acts as the Schiff-base intermediate with substrate in catalysis. T205 provides a ligand contact to pyruvate.

The protein belongs to the DapA family. Homotetramer; dimer of dimers.

It localises to the cytoplasm. The enzyme catalyses L-aspartate 4-semialdehyde + pyruvate = (2S,4S)-4-hydroxy-2,3,4,5-tetrahydrodipicolinate + H2O + H(+). It participates in amino-acid biosynthesis; L-lysine biosynthesis via DAP pathway; (S)-tetrahydrodipicolinate from L-aspartate: step 3/4. Catalyzes the condensation of (S)-aspartate-beta-semialdehyde [(S)-ASA] and pyruvate to 4-hydroxy-tetrahydrodipicolinate (HTPA). In Rickettsia felis (strain ATCC VR-1525 / URRWXCal2) (Rickettsia azadi), this protein is 4-hydroxy-tetrahydrodipicolinate synthase.